The chain runs to 249 residues: Sugar fermentation stimulation protein homolog (249 aa).

It belongs to the SfsA family.

This is Sugar fermentation stimulation protein homolog from Prochlorococcus marinus (strain MIT 9515).